Here is a 289-residue protein sequence, read N- to C-terminus: Pantothenate synthetase (289 aa).

Met-30–His-37 contributes to the ATP binding site. His-37 (proton donor) is an active-site residue. Gln-61 lines the (R)-pantoate pocket. Gln-61 contributes to the beta-alanine binding site. Gly-147 to Asp-150 serves as a coordination point for ATP. Residue Gln-153 coordinates (R)-pantoate. ATP-binding positions include Val-176 and Lys-184 to Arg-187.

The protein belongs to the pantothenate synthetase family. In terms of assembly, homodimer.

The protein resides in the cytoplasm. It carries out the reaction (R)-pantoate + beta-alanine + ATP = (R)-pantothenate + AMP + diphosphate + H(+). Its pathway is cofactor biosynthesis; (R)-pantothenate biosynthesis; (R)-pantothenate from (R)-pantoate and beta-alanine: step 1/1. In terms of biological role, catalyzes the condensation of pantoate with beta-alanine in an ATP-dependent reaction via a pantoyl-adenylate intermediate. This is Pantothenate synthetase from Geobacillus thermodenitrificans (strain NG80-2).